The chain runs to 219 residues: Large ribosomal subunit protein bL25 (219 aa).

Residues 188–219 (TVAAPADTAVQPESSSTKGKKDEDGALAKDKK) are disordered. The segment covering 206–219 (GKKDEDGALAKDKK) has biased composition (basic and acidic residues).

Belongs to the bacterial ribosomal protein bL25 family. CTC subfamily. As to quaternary structure, part of the 50S ribosomal subunit; part of the 5S rRNA/L5/L18/L25 subcomplex. Contacts the 5S rRNA. Binds to the 5S rRNA independently of L5 and L18.

Its function is as follows. This is one of the proteins that binds to the 5S RNA in the ribosome where it forms part of the central protuberance. This is Large ribosomal subunit protein bL25 from Elusimicrobium minutum (strain Pei191).